The chain runs to 206 residues: Large ribosomal subunit protein uL4 (206 aa).

Residues 63–93 (MYKQKGTGRARHHSARAPQFRGGGKAHGPVV) are disordered. The span at 64-77 (YKQKGTGRARHHSA) shows a compositional bias: basic residues.

This sequence belongs to the universal ribosomal protein uL4 family. Part of the 50S ribosomal subunit.

In terms of biological role, one of the primary rRNA binding proteins, this protein initially binds near the 5'-end of the 23S rRNA. It is important during the early stages of 50S assembly. It makes multiple contacts with different domains of the 23S rRNA in the assembled 50S subunit and ribosome. Functionally, forms part of the polypeptide exit tunnel. This chain is Large ribosomal subunit protein uL4, found in Sinorhizobium fredii (strain NBRC 101917 / NGR234).